A 316-amino-acid chain; its full sequence is Pantothenate kinase (316 aa).

95–102 is a binding site for ATP; that stretch reads GSVSVGKS.

The protein belongs to the prokaryotic pantothenate kinase family.

It localises to the cytoplasm. It catalyses the reaction (R)-pantothenate + ATP = (R)-4'-phosphopantothenate + ADP + H(+). It functions in the pathway cofactor biosynthesis; coenzyme A biosynthesis; CoA from (R)-pantothenate: step 1/5. The sequence is that of Pantothenate kinase from Actinobacillus pleuropneumoniae serotype 7 (strain AP76).